The primary structure comprises 536 residues: Chaperonin GroEL 2 (536 aa).

ATP contacts are provided by residues 29–32, 86–90, glycine 412, and aspartate 495; these read TLGP and DGTTT.

The protein belongs to the chaperonin (HSP60) family. Forms a cylinder of 14 subunits composed of two heptameric rings stacked back-to-back. Interacts with the co-chaperonin GroES.

It localises to the cytoplasm. The enzyme catalyses ATP + H2O + a folded polypeptide = ADP + phosphate + an unfolded polypeptide.. Its function is as follows. Together with its co-chaperonin GroES, plays an essential role in assisting protein folding. The GroEL-GroES system forms a nano-cage that allows encapsulation of the non-native substrate proteins and provides a physical environment optimized to promote and accelerate protein folding. The chain is Chaperonin GroEL 2 from Arthrobacter sp. (strain FB24).